Here is a 327-residue protein sequence, read N- to C-terminus: Inactive peptidyl-prolyl cis-trans isomerase FKBP6 (327 aa).

The PPIase FKBP-type domain maps to 54–143 (DASVLVKYSG…LFEIELLDFL (90 aa)). TPR repeat units lie at residues 171-204 (AATE…LRRR), 219-252 (LPVL…DQKN), and 253-286 (AKAL…QPFN).

This sequence belongs to the FKBP6 family. Interacts (via TPR repeats) with HSP90. Interacts with HSP72/HSPA2 and CLTC. Interacts with GAPDH; leading to inhibit GAPDH catalytic activity. In terms of tissue distribution, detected in all tissues examined, with higher expression in testis, heart, skeletal muscle, liver, and kidney.

It localises to the cytoplasm. The protein resides in the nucleus. Its function is as follows. Has an essential role in spermatogenesis. It is required to repress transposable elements and prevent their mobilization, which is essential for the germline integrity. Acts via the piRNA metabolic process, which mediates the repression of transposable elements during meiosis by forming complexes composed of piRNAs and Piwi proteins and govern the methylation and subsequent repression of transposons. Acts as a co-chaperone via its interaction with HSP90 and is required for the piRNA amplification process, the secondary piRNA biogenesis. May be required together with HSP90 in removal of 16 nucleotide ping-pong by-products from Piwi complexes, possibly facilitating turnover of Piwi complexes. The chain is Inactive peptidyl-prolyl cis-trans isomerase FKBP6 (FKBP6) from Homo sapiens (Human).